We begin with the raw amino-acid sequence, 125 residues long: Snaclec B6 (125 aa).

Disulfide bonds link Cys-2–Cys-13, Cys-30–Cys-119, and Cys-96–Cys-111. The C-type lectin domain occupies 9 to 120 (HEGHCYKVFK…CNISQYFVCQ (112 aa)). Residue Asn-95 is glycosylated (N-linked (GlcNAc...) asparagine). Residue Asn-112 is glycosylated (N-linked (GlcNAc...) asparagine).

The protein belongs to the snaclec family. In terms of assembly, heterodimer; disulfide-linked. As to expression, expressed by the venom gland.

The protein localises to the secreted. Interferes with one step of hemostasis (modulation of platelet aggregation, or coagulation cascade, for example). In Macrovipera lebetinus (Levantine viper), this protein is Snaclec B6.